Here is a 173-residue protein sequence, read N- to C-terminus: MGTPCHYALFDLQPAFRLDLDKLAVRYRELAREVHPDRFADASEREQRVALEKSAALNDAYQTLRSAPRRARYLLAIGGHEVPQEVTVHDPDFLLQQMQWREELEELQDEADLDGVGVFKKRLKVAQDTLNDDFADCWDDAAQRDKAERLMRRMQFLDKLAQEVRQLEERLDD.

The J domain occupies 5-77 (CHYALFDLQP…PRRARYLLAI (73 aa)).

This sequence belongs to the HscB family. As to quaternary structure, interacts with HscA and stimulates its ATPase activity.

Its function is as follows. Co-chaperone involved in the maturation of iron-sulfur cluster-containing proteins. Seems to help targeting proteins to be folded toward HscA. This chain is Co-chaperone protein HscB homolog, found in Pseudomonas entomophila (strain L48).